A 185-amino-acid polypeptide reads, in one-letter code: CASP-like protein SELMODRAFT_413556 (185 aa).

At 1-89 the chain is on the cytoplasmic side; that stretch reads MATLPLSLIF…AVTVLFYLAK (89 aa). A helical membrane pass occupies residues 90–110; sequence LVFGILGLALSIIWLLHIIVF. Residues 111-131 lie on the Extracellular side of the membrane; sequence MLVNPPAFPFLNQVFIQLDSA. A helical membrane pass occupies residues 132 to 152; sequence WGLLGTTAFAIFCYYLIMSVI. The Cytoplasmic portion of the chain corresponds to 153–163; that stretch reads SGEMHSIHPMK. Residues 164–184 traverse the membrane as a helical segment; that stretch reads YQGTLMNSFLFNVAIILLCST. Residue Arg185 is a topological domain, extracellular.

The protein belongs to the Casparian strip membrane proteins (CASP) family. Homodimer and heterodimers.

It is found in the cell membrane. The protein is CASP-like protein SELMODRAFT_413556 of Selaginella moellendorffii (Spikemoss).